Here is a 414-residue protein sequence, read N- to C-terminus: Tyrosine--tRNA ligase (414 aa).

Tyr38 lines the L-tyrosine pocket. A 'HIGH' region motif is present at residues 43-52 (PTATSLHLGN). The L-tyrosine site is built by Tyr165 and Gln169. A 'KMSKS' region motif is present at residues 228-232 (KFGKS). Lys231 contributes to the ATP binding site. Positions 349-414 (FNANQIIDLG…KKYFFIIELI (66 aa)) constitute an S4 RNA-binding domain.

This sequence belongs to the class-I aminoacyl-tRNA synthetase family. TyrS type 1 subfamily. In terms of assembly, homodimer.

Its subcellular location is the cytoplasm. It carries out the reaction tRNA(Tyr) + L-tyrosine + ATP = L-tyrosyl-tRNA(Tyr) + AMP + diphosphate + H(+). In terms of biological role, catalyzes the attachment of tyrosine to tRNA(Tyr) in a two-step reaction: tyrosine is first activated by ATP to form Tyr-AMP and then transferred to the acceptor end of tRNA(Tyr). This is Tyrosine--tRNA ligase from Mesomycoplasma hyopneumoniae (strain 232) (Mycoplasma hyopneumoniae).